Reading from the N-terminus, the 267-residue chain is Tryptophan synthase alpha chain (267 aa).

Residues glutamate 39 and aspartate 50 each act as proton acceptor in the active site.

Belongs to the TrpA family. As to quaternary structure, tetramer of two alpha and two beta chains.

The catalysed reaction is (1S,2R)-1-C-(indol-3-yl)glycerol 3-phosphate + L-serine = D-glyceraldehyde 3-phosphate + L-tryptophan + H2O. Its pathway is amino-acid biosynthesis; L-tryptophan biosynthesis; L-tryptophan from chorismate: step 5/5. Its function is as follows. The alpha subunit is responsible for the aldol cleavage of indoleglycerol phosphate to indole and glyceraldehyde 3-phosphate. The polypeptide is Tryptophan synthase alpha chain (Helicobacter hepaticus (strain ATCC 51449 / 3B1)).